A 203-amino-acid polypeptide reads, in one-letter code: Xrcc4-like factor 1 (203 aa).

Belongs to the XRCC4-XLF family. XLF subfamily.

Its subcellular location is the nucleus. Involved in double-strand break repair via non-homologous end joining (NHEJ); the repair of a double-strand break in DNA in which the two broken ends are rejoined with little or no sequence complementarity. Has a role in meiosis. This Schizosaccharomyces pombe (strain 972 / ATCC 24843) (Fission yeast) protein is Xrcc4-like factor 1 (xlf1).